Reading from the N-terminus, the 380-residue chain is MYSSSVCIKIHLERLRYNLRILRSRYPNVMPVIKANAYGHGIRVVANVLRDEGVQHMAVGSITEGFLLRQEGHQAFLLALLGPFSEEDARIAVVHNITPVIHNIESLQSIVHYSRVHQGGTAVPVAIKIDTGMGRLGFSSNDYISLIDLLRHTPEVNPILLLSHLVAPEISSLDNVTHNQVEQFARAYKAIKEAFPTIKTSLTNSPGLLAWPNYIGDFSRPGIALYGGNPFYGTSRVSLGKGFLPVMEVEAPVVAINTVSAGSSIGYGCTYYAKEDIRVAVIGAGYADGYSRSFSNKGWVVIKGKRYRIVGRVCMQMLMVDITNSHSKISIGDKAFLLGGGGSLAIKPEELAEWWGTIPHEVCCSLGSSIGAQQKQLVII.

Lys34 functions as the Proton acceptor; specific for D-alanine in the catalytic mechanism. Lys34 is modified (N6-(pyridoxal phosphate)lysine). Substrate is bound at residue Arg135. The active-site Proton acceptor; specific for L-alanine is Tyr267. Residue Met315 coordinates substrate.

It belongs to the alanine racemase family. It depends on pyridoxal 5'-phosphate as a cofactor.

It catalyses the reaction L-alanine = D-alanine. It participates in amino-acid biosynthesis; D-alanine biosynthesis; D-alanine from L-alanine: step 1/1. In terms of biological role, catalyzes the interconversion of L-alanine and D-alanine. May also act on other amino acids. This Lawsonia intracellularis (strain PHE/MN1-00) protein is Alanine racemase (alr).